The primary structure comprises 224 residues: Probable C-&gt;U-editing enzyme APOBEC-2 (224 aa).

Residues 1 to 25 (MAQKEEAAAATEAASQNGEDLENLD) are disordered. 2 residues coordinate Zn(2+): glutamate 60 and histidine 98. The region spanning 64 to 169 (GRNKTFLCYV…LEIQDALKKL (106 aa)) is the CMP/dCMP-type deaminase domain. Glutamate 100 acts as the Proton donor in catalysis. 2 residues coordinate Zn(2+): cysteine 128 and cysteine 131.

The protein belongs to the cytidine and deoxycytidylate deaminase family. In terms of assembly, homotetramer. Zn(2+) serves as cofactor.

It catalyses the reaction cytidine(6666) in apoB mRNA + H2O + H(+) = uridine(6666) in apoB mRNA + NH4(+). Its function is as follows. Probable C to U editing enzyme whose physiological substrate is not yet known. Does not display detectable apoB mRNA editing. Has a low intrinsic cytidine deaminase activity. May play a role in the epigenetic regulation of gene expression through the process of active DNA demethylation. The sequence is that of Probable C-&gt;U-editing enzyme APOBEC-2 (APOBEC2) from Pongo pygmaeus (Bornean orangutan).